Reading from the N-terminus, the 426-residue chain is tRNA(Ile)-lysidine synthase (426 aa).

19–24 lines the ATP pocket; sequence SGGLDS.

This sequence belongs to the tRNA(Ile)-lysidine synthase family.

It is found in the cytoplasm. The catalysed reaction is cytidine(34) in tRNA(Ile2) + L-lysine + ATP = lysidine(34) in tRNA(Ile2) + AMP + diphosphate + H(+). Functionally, ligates lysine onto the cytidine present at position 34 of the AUA codon-specific tRNA(Ile) that contains the anticodon CAU, in an ATP-dependent manner. Cytidine is converted to lysidine, thus changing the amino acid specificity of the tRNA from methionine to isoleucine. This Neisseria meningitidis serogroup A / serotype 4A (strain DSM 15465 / Z2491) protein is tRNA(Ile)-lysidine synthase.